A 247-amino-acid chain; its full sequence is Adenosylcobinamide-GDP ribazoletransferase (247 aa).

Helical transmembrane passes span 34–54, 59–79, 113–133, 138–158, and 194–214; these read IITF…VFMV, CGVP…TGGF, GGLA…ELAL, ILAL…LLMY, and VLLP…AIFI.

This sequence belongs to the CobS family. Mg(2+) serves as cofactor.

It is found in the cell inner membrane. It catalyses the reaction alpha-ribazole + adenosylcob(III)inamide-GDP = adenosylcob(III)alamin + GMP + H(+). It carries out the reaction alpha-ribazole 5'-phosphate + adenosylcob(III)inamide-GDP = adenosylcob(III)alamin 5'-phosphate + GMP + H(+). It participates in cofactor biosynthesis; adenosylcobalamin biosynthesis; adenosylcobalamin from cob(II)yrinate a,c-diamide: step 7/7. Its function is as follows. Joins adenosylcobinamide-GDP and alpha-ribazole to generate adenosylcobalamin (Ado-cobalamin). Also synthesizes adenosylcobalamin 5'-phosphate from adenosylcobinamide-GDP and alpha-ribazole 5'-phosphate. This Shigella boydii serotype 4 (strain Sb227) protein is Adenosylcobinamide-GDP ribazoletransferase.